We begin with the raw amino-acid sequence, 252 residues long: MAGIDLNADLGEGFGVWRLGDDDAMLGIVSSANVACGFHAGDPAGLLRVCRSAAERGVRVGAQVSYRDLAGFGRRFIDVAADELLADVVYQIGALQAIAHAAGSSVCYVKPHGALYNTIVTHPAQAAAVAEAVRLVDPGLPVLGMAGSVFFDEAARRGLRVVAEAFADRAYRPDGRLVSRREPGAVLADPAAIAERVLAMVETGAVTAVDGTRLALSVESVCVHGDSPGAVQIATAVRDRLRAAGVEIRAFC.

Belongs to the LamB/PxpA family. Forms a complex composed of PxpA, PxpB and PxpC.

The catalysed reaction is 5-oxo-L-proline + ATP + 2 H2O = L-glutamate + ADP + phosphate + H(+). Its function is as follows. Catalyzes the cleavage of 5-oxoproline to form L-glutamate coupled to the hydrolysis of ATP to ADP and inorganic phosphate. The protein is 5-oxoprolinase subunit A of Mycobacterium avium (strain 104).